The chain runs to 538 residues: Bifunctional purine biosynthesis protein PurH (538 aa).

An MGS-like domain is found at 8–158; sequence IPAPDKVEIK…KNHAYVTILT (151 aa).

It belongs to the PurH family.

It carries out the reaction (6R)-10-formyltetrahydrofolate + 5-amino-1-(5-phospho-beta-D-ribosyl)imidazole-4-carboxamide = 5-formamido-1-(5-phospho-D-ribosyl)imidazole-4-carboxamide + (6S)-5,6,7,8-tetrahydrofolate. It catalyses the reaction IMP + H2O = 5-formamido-1-(5-phospho-D-ribosyl)imidazole-4-carboxamide. It participates in purine metabolism; IMP biosynthesis via de novo pathway; 5-formamido-1-(5-phospho-D-ribosyl)imidazole-4-carboxamide from 5-amino-1-(5-phospho-D-ribosyl)imidazole-4-carboxamide (10-formyl THF route): step 1/1. It functions in the pathway purine metabolism; IMP biosynthesis via de novo pathway; IMP from 5-formamido-1-(5-phospho-D-ribosyl)imidazole-4-carboxamide: step 1/1. The sequence is that of Bifunctional purine biosynthesis protein PurH from Rhizobium etli (strain CIAT 652).